Here is a 59-residue protein sequence, read N- to C-terminus: Cecropin-A1 (59 aa).

A signal peptide spans 1-23 (MNFTKLFAIVLLAALVLLGQTEA).

It belongs to the cecropin family.

It localises to the secreted. Cecropins have lytic and antibacterial activity against several Gram-positive and Gram-negative bacteria. The chain is Cecropin-A1 (CECA1) from Aedes albopictus (Asian tiger mosquito).